Reading from the N-terminus, the 750-residue chain is Photosystem I P700 chlorophyll a apoprotein A1 (750 aa).

Helical transmembrane passes span 70 to 93 (VFSA…FHGA), 156 to 179 (LYCT…FHYH), 195 to 219 (LNHH…HVSL), 291 to 309 (IAHH…GHMY), 346 to 369 (WHAQ…HHMY), 385 to 411 (LSLF…IFMV), 433 to 455 (AIIS…LYIH), and 531 to 549 (FLVH…LILL). Cysteine 573 and cysteine 582 together coordinate [4Fe-4S] cluster. 2 helical membrane passes run 589–610 (HVFL…HFSW) and 664–686 (LSAY…MFLF). Position 675 (histidine 675) interacts with chlorophyll a'. Residues methionine 683 and tyrosine 691 each contribute to the chlorophyll a site. Position 692 (tryptophan 692) interacts with phylloquinone. The helical transmembrane segment at 724–744 (AVGVTHYLLGGIATTWAFFLA) threads the bilayer.

It belongs to the PsaA/PsaB family. As to quaternary structure, the PsaA/B heterodimer binds the P700 chlorophyll special pair and subsequent electron acceptors. PSI consists of a core antenna complex that captures photons, and an electron transfer chain that converts photonic excitation into a charge separation. The eukaryotic PSI reaction center is composed of at least 11 subunits. It depends on P700 is a chlorophyll a/chlorophyll a' dimer, A0 is one or more chlorophyll a, A1 is one or both phylloquinones and FX is a shared 4Fe-4S iron-sulfur center. as a cofactor.

The protein resides in the plastid. It localises to the chloroplast thylakoid membrane. It carries out the reaction reduced [plastocyanin] + hnu + oxidized [2Fe-2S]-[ferredoxin] = oxidized [plastocyanin] + reduced [2Fe-2S]-[ferredoxin]. Functionally, psaA and PsaB bind P700, the primary electron donor of photosystem I (PSI), as well as the electron acceptors A0, A1 and FX. PSI is a plastocyanin-ferredoxin oxidoreductase, converting photonic excitation into a charge separation, which transfers an electron from the donor P700 chlorophyll pair to the spectroscopically characterized acceptors A0, A1, FX, FA and FB in turn. Oxidized P700 is reduced on the lumenal side of the thylakoid membrane by plastocyanin. This chain is Photosystem I P700 chlorophyll a apoprotein A1, found in Citrus sinensis (Sweet orange).